Consider the following 509-residue polypeptide: MKRALISVSDKNGIVPFAEKLVELGVEIISTGGTKAAFEQAGVPVTGIEEVTEFPEMLDGRVKTLHPAIHGGLLARRDTAEHMEAIAAHDIKPIDLVVVNLYPFQETIQKSGVTLEEAIENIDIGGPSMLRSAAKNYAAVTVVVDTVDYDTVLTELEEHGATTFETRQRLAAKVFRHTAAYDALIAEYLTNITGETFPEKVTLTYNRKQVLRYGENPHQDAAFYTEPGTVENSISSAKQLHGKELSYNNIRDADAALKIASEFTEPVAVAVKHMNPCGVGVGENIEEAYLKAYEADETSIFGGIVALNKEVDAKTAEHMSKIFLEIIIAPSFSEEAFAILTKKKNIRLLTVPFAGSVKGFEKTSVNGGLLIQASDSVIEDTASYEVVTEKQPTEAEMKALIAQWKIVKHVKSNAIVVGSDKQTLGIGAGQMNRIGSALIALEQAGEKAKGAVLASDAFFPMDDTVEAAAKAGITAIIQPGGSIKDKESIAMANKYGISMVLTHVRHFKH.

Residues 1–144 (MKRALISVSD…KNYAAVTVVV (144 aa)) enclose the MGS-like domain.

Belongs to the PurH family.

The catalysed reaction is (6R)-10-formyltetrahydrofolate + 5-amino-1-(5-phospho-beta-D-ribosyl)imidazole-4-carboxamide = 5-formamido-1-(5-phospho-D-ribosyl)imidazole-4-carboxamide + (6S)-5,6,7,8-tetrahydrofolate. The enzyme catalyses IMP + H2O = 5-formamido-1-(5-phospho-D-ribosyl)imidazole-4-carboxamide. It participates in purine metabolism; IMP biosynthesis via de novo pathway; 5-formamido-1-(5-phospho-D-ribosyl)imidazole-4-carboxamide from 5-amino-1-(5-phospho-D-ribosyl)imidazole-4-carboxamide (10-formyl THF route): step 1/1. It functions in the pathway purine metabolism; IMP biosynthesis via de novo pathway; IMP from 5-formamido-1-(5-phospho-D-ribosyl)imidazole-4-carboxamide: step 1/1. This is Bifunctional purine biosynthesis protein PurH from Listeria monocytogenes serotype 4a (strain HCC23).